The chain runs to 335 residues: 4-hydroxy-3-methylbut-2-enyl diphosphate reductase (335 aa).

Residue Cys14 coordinates [4Fe-4S] cluster. Residues His43 and His81 each contribute to the (2E)-4-hydroxy-3-methylbut-2-enyl diphosphate site. Dimethylallyl diphosphate contacts are provided by His43 and His81. Residues His43 and His81 each coordinate isopentenyl diphosphate. Residue Cys103 coordinates [4Fe-4S] cluster. His132 provides a ligand contact to (2E)-4-hydroxy-3-methylbut-2-enyl diphosphate. His132 provides a ligand contact to dimethylallyl diphosphate. His132 is an isopentenyl diphosphate binding site. The active-site Proton donor is the Glu134. Residue Thr179 coordinates (2E)-4-hydroxy-3-methylbut-2-enyl diphosphate. Cys209 provides a ligand contact to [4Fe-4S] cluster. (2E)-4-hydroxy-3-methylbut-2-enyl diphosphate is bound by residues Ser237, Ser238, Asn239, and Ser285. Positions 237, 238, 239, and 285 each coordinate dimethylallyl diphosphate. Residues Ser237, Ser238, Asn239, and Ser285 each coordinate isopentenyl diphosphate.

It belongs to the IspH family. [4Fe-4S] cluster serves as cofactor.

It catalyses the reaction isopentenyl diphosphate + 2 oxidized [2Fe-2S]-[ferredoxin] + H2O = (2E)-4-hydroxy-3-methylbut-2-enyl diphosphate + 2 reduced [2Fe-2S]-[ferredoxin] + 2 H(+). The catalysed reaction is dimethylallyl diphosphate + 2 oxidized [2Fe-2S]-[ferredoxin] + H2O = (2E)-4-hydroxy-3-methylbut-2-enyl diphosphate + 2 reduced [2Fe-2S]-[ferredoxin] + 2 H(+). The protein operates within isoprenoid biosynthesis; dimethylallyl diphosphate biosynthesis; dimethylallyl diphosphate from (2E)-4-hydroxy-3-methylbutenyl diphosphate: step 1/1. Its pathway is isoprenoid biosynthesis; isopentenyl diphosphate biosynthesis via DXP pathway; isopentenyl diphosphate from 1-deoxy-D-xylulose 5-phosphate: step 6/6. In terms of biological role, catalyzes the conversion of 1-hydroxy-2-methyl-2-(E)-butenyl 4-diphosphate (HMBPP) into a mixture of isopentenyl diphosphate (IPP) and dimethylallyl diphosphate (DMAPP). Acts in the terminal step of the DOXP/MEP pathway for isoprenoid precursor biosynthesis. This chain is 4-hydroxy-3-methylbut-2-enyl diphosphate reductase, found in Deinococcus radiodurans (strain ATCC 13939 / DSM 20539 / JCM 16871 / CCUG 27074 / LMG 4051 / NBRC 15346 / NCIMB 9279 / VKM B-1422 / R1).